The sequence spans 158 residues: U-limacoditoxin(8)-Dv66 (158 aa).

Residues 1-24 form the signal peptide; sequence MALRAPWIALCCVLAVLFVVPAAT. A propeptide spanning residues 25–32 is cleaved from the precursor; the sequence is RDEERQKR. 2 tandem repeats follow at residues 33-78 and 79-124. Residues 33–158 are 3 X 46 AA tandem repeats; the sequence is GVDFGLQRGF…AQDPHGPGRK (126 aa). At Pro-63 the chain carries Proline amide. Positions 64 to 78 are excised as a propeptide; that stretch reads GRKRRDAYEMERQKR. The disordered stretch occupies residues 101–120; that stretch reads ARAQDPHGPGRKRRDAYEME. Position 109 is a proline amide (Pro-109). The propeptide occupies 110–124; sequence GRKRRDAYEMERQKR. The stretch at 125-158 is one 3; half-length repeat; that stretch reads GVDFGLQRGFSGSELAKLKLALARAQDPHGPGRK. Pro-155 bears the Proline amide mark.

It belongs to the diuretic hormone class 2 family. In terms of tissue distribution, expressed by the venom secretory cell of the spine. The spine is a cuticular structure containing a single large nucleated venom-secreting cell at its base. It is an independent unit capable of producing, storing and injecting venom. On the back of D.vulnerans caterpillars, spines are grouped together by 50 to 100 to form scoli, of which there are eight in D.vulnerans.

It localises to the secreted. Its function is as follows. Probable toxin. Does not show insecticidal, antimicrobial and antiparasitic activities. Does not induce increase in intracellular calcium in mouse DRG neurons, suggesting that it does not induce pain. The chain is U-limacoditoxin(8)-Dv66 from Doratifera vulnerans (Mottled cup moth).